The primary structure comprises 106 residues: MRLTYVLLVAVTTLLVSCDATKPSTEATAVSKRLLRFVEAADEEERRIDFSPEKLRKMLGDETYRLKKFGKWDSDGHTFDGLKHYLLLSDSSMVKLRNMYKAWLEQ.

An N-terminal signal peptide occupies residues 1–20; the sequence is MRLTYVLLVAVTTLLVSCDA. Positions 33 to 46 match the RxLR-dEER motif; sequence RLLRFVEAADEEER. The WY domain stretch occupies residues 50 to 106; it reads FSPEKLRKMLGDETYRLKKFGKWDSDGHTFDGLKHYLLLSDSSMVKLRNMYKAWLEQ. The short motif at 56 to 69 is the Bipartite nuclear localization signal (NLS) element; it reads RKMLGDETYRLKKF.

The protein belongs to the RxLR effector family. As to quaternary structure, interacts with host PINP1.

The protein localises to the secreted. It is found in the host nucleus. Functionally, secreted effector that possesses RNA silencing suppression activity by inhibiting the biogenesis of small RNAs in the host plant to promote enhanced susceptibility of host to the pathogen during infection. Interferes with secondary siRNA production by associating with host nuclear protein PINP1 that acts as a regulator of the accumulation of both microRNAs and endogenous small interfering RNAs. The chain is RxLR effector protein PSR1 from Phytophthora sojae (Soybean stem and root rot agent).